A 586-amino-acid chain; its full sequence is uncharacterized protein (586 aa).

2 coiled-coil regions span residues 183–293 (THTE…ELEN) and 331–400 (FKDK…DKKN).

This is an uncharacterized protein from Bacillus subtilis (strain 168).